A 379-amino-acid polypeptide reads, in one-letter code: Succinate--CoA ligase [ADP-forming] subunit beta (379 aa).

Residues 9 to 235 enclose the ATP-grasp domain; sequence KEIAKNNGIP…GRELSEMEAI (227 aa). ATP-binding residues include K45, E91, I94, and E99. Positions 191 and 205 each coordinate Mg(2+). Substrate contacts are provided by residues N255 and 312-314; that span reads GIT.

It belongs to the succinate/malate CoA ligase beta subunit family. In terms of assembly, heterotetramer of two alpha and two beta subunits. Mg(2+) is required as a cofactor.

The catalysed reaction is succinate + ATP + CoA = succinyl-CoA + ADP + phosphate. The enzyme catalyses GTP + succinate + CoA = succinyl-CoA + GDP + phosphate. It functions in the pathway carbohydrate metabolism; tricarboxylic acid cycle; succinate from succinyl-CoA (ligase route): step 1/1. Its function is as follows. Succinyl-CoA synthetase functions in the citric acid cycle (TCA), coupling the hydrolysis of succinyl-CoA to the synthesis of either ATP or GTP and thus represents the only step of substrate-level phosphorylation in the TCA. The beta subunit provides nucleotide specificity of the enzyme and binds the substrate succinate, while the binding sites for coenzyme A and phosphate are found in the alpha subunit. The sequence is that of Succinate--CoA ligase [ADP-forming] subunit beta from Staphylothermus marinus (strain ATCC 43588 / DSM 3639 / JCM 9404 / F1).